Here is a 421-residue protein sequence, read N- to C-terminus: 26S proteasome non-ATPase regulatory subunit 11A (421 aa).

A PCI domain is found at 227-391; the sequence is AYSYFYEAFE…GVLIVFDEPP (165 aa).

Belongs to the proteasome subunit S9 family. As to quaternary structure, component of the lid subcomplex of the 19S proteasome regulatory particle complex (also named PA700 complex). The 26S proteasome consists of a 20S proteasome core and two 19S regulatory subunits.

The protein resides in the nucleus. It is found in the cytoplasm. Its subcellular location is the cytosol. In terms of biological role, component of the lid subcomplex of the 26S proteasome, a multiprotein complex involved in the ATP-dependent degradation of ubiquitinated proteins. In the complex, psmd11a is required for proteasome assembly. This Danio rerio (Zebrafish) protein is 26S proteasome non-ATPase regulatory subunit 11A (psmd11a).